The primary structure comprises 35 residues: Probable protein L3 (35 aa).

The protein is Probable protein L3 of Odocoileus virginianus papillomavirus 1 (DPV).